The primary structure comprises 484 residues: Vanillin dehydrogenase (484 aa).

NADP(+)-binding positions include 156 to 157 (WN), 180 to 183 (KPAS), and 234 to 235 (GS). NAD(+) contacts are provided by residues lysine 180 and 234–239 (GSTPVG). The active-site Proton acceptor is the glutamate 258. Residue leucine 259 participates in NADP(+) binding. Cysteine 292 (nucleophile) is an active-site residue. NAD(+) is bound by residues glutamine 339 and glutamate 386. NADP(+) is bound at residue glutamate 386.

This sequence belongs to the aldehyde dehydrogenase family. In terms of assembly, exists as a homodimer, homotrimer and homotetramer.

It catalyses the reaction vanillin + NAD(+) + H2O = vanillate + NADH + 2 H(+). The enzyme catalyses vanillin + NADP(+) + H2O = vanillate + NADPH + 2 H(+). The catalysed reaction is 3,4-dihydroxybenzaldehyde + NAD(+) + H2O = 3,4-dihydroxybenzoate + NADH + 2 H(+). It carries out the reaction 3,4-dihydroxybenzaldehyde + NADP(+) + H2O = 3,4-dihydroxybenzoate + NADPH + 2 H(+). It catalyses the reaction 4-hydroxybenzaldehyde + NAD(+) + H2O = 4-hydroxybenzoate + NADH + 2 H(+). The enzyme catalyses 4-hydroxybenzaldehyde + NADP(+) + H2O = 4-hydroxybenzoate + NADPH + 2 H(+). Functionally, catalyzes oxidation of vanillin to vanillate. Also oxidizes 3,4-dihydroxybenzaldehyde and 4-hydroxybenzaldehyde significantly. Other aromatic aldehyde substrates in the order of decreasing activity include 3-hydroxybenzaldehyde, 4-nitrobenzaldehyde, terephthalaldehyde, 2,4-dichlorobenzaldehyde, benzaldehyde and 3-phenylpropanal. Low activity with phthalaldehyde, cinnamaldehyde and syringaldehyde. No activity with phenylacetaldehyde, formaldehyde or aldehyde. Active with both NAD(+) and NADP(+). Involved in the degradation pathway of lignin-derived aromatic compounds of plant cell walls. Catalyzes the conversion of vanillin to vanillate due to toxicity of vanillin to the cells. The protein is Vanillin dehydrogenase of Corynebacterium glutamicum (strain ATCC 13032 / DSM 20300 / JCM 1318 / BCRC 11384 / CCUG 27702 / LMG 3730 / NBRC 12168 / NCIMB 10025 / NRRL B-2784 / 534).